Consider the following 407-residue polypeptide: uncharacterized protein (407 aa).

Residues 10–37 (DKLEQLANDVVTELTDMENKYKDLHVEL) are a coiled coil.

This is an uncharacterized protein from Bacillus subtilis (strain 168).